We begin with the raw amino-acid sequence, 386 residues long: Acetate kinase (386 aa).

Residue Asn-9 participates in Mg(2+) binding. Residue Lys-16 coordinates ATP. Position 74 (Arg-74) interacts with substrate. The Proton donor/acceptor role is filled by Asp-131. Residues 191 to 195 (HLGNG), 265 to 267 (DFR), and 313 to 317 (GVGEN) contribute to the ATP site. Residue Glu-367 coordinates Mg(2+).

The protein belongs to the acetokinase family. In terms of assembly, homodimer. Mg(2+) is required as a cofactor. Requires Mn(2+) as cofactor.

It localises to the cytoplasm. The catalysed reaction is acetate + ATP = acetyl phosphate + ADP. It functions in the pathway metabolic intermediate biosynthesis; acetyl-CoA biosynthesis; acetyl-CoA from acetate: step 1/2. In terms of biological role, catalyzes the formation of acetyl phosphate from acetate and ATP. Can also catalyze the reverse reaction. The polypeptide is Acetate kinase (Mycolicibacterium gilvum (strain PYR-GCK) (Mycobacterium gilvum (strain PYR-GCK))).